The sequence spans 1241 residues: DNA-directed RNA polymerase subunit beta (1241 aa).

Residues 1186-1210 (EDEIVPTAEKRSSNQDEEALELVDN) are disordered. The span at 1200–1210 (QDEEALELVDN) shows a compositional bias: acidic residues.

It belongs to the RNA polymerase beta chain family. In terms of assembly, the RNAP catalytic core consists of 2 alpha, 1 beta, 1 beta' and 1 omega subunit. When a sigma factor is associated with the core the holoenzyme is formed, which can initiate transcription.

It carries out the reaction RNA(n) + a ribonucleoside 5'-triphosphate = RNA(n+1) + diphosphate. Its function is as follows. DNA-dependent RNA polymerase catalyzes the transcription of DNA into RNA using the four ribonucleoside triphosphates as substrates. The polypeptide is DNA-directed RNA polymerase subunit beta (Clostridium novyi (strain NT)).